Here is a 35-residue protein sequence, read N- to C-terminus: Thionin NsW2 (35 aa).

3 disulfides stabilise this stretch: Cys4–Cys32, Cys12–Cys30, and Cys16–Cys26.

In terms of processing, contains 4 disulfide bonds.

Its subcellular location is the secreted. In terms of biological role, antimicrobial peptide disrupting membranes. Has antibacterial against Gram-positive bacteria S.aureus (MIC=6.5 uM) and B.subtilis (MIC=3.25 uM) but not against Gram-negative bacterium E.coli. Has antifungal activity against C.albicans (MIC=3.25 uM). The sequence is that of Thionin NsW2 from Nigella sativa (Black cumin).